A 430-amino-acid chain; its full sequence is Trigger factor (430 aa).

In terms of domain architecture, PPIase FKBP-type spans 163 to 248; sequence GDVVDVDYKG…LNSIKTSILP (86 aa).

It belongs to the FKBP-type PPIase family. Tig subfamily.

It is found in the cytoplasm. It catalyses the reaction [protein]-peptidylproline (omega=180) = [protein]-peptidylproline (omega=0). In terms of biological role, involved in protein export. Acts as a chaperone by maintaining the newly synthesized protein in an open conformation. Functions as a peptidyl-prolyl cis-trans isomerase. The sequence is that of Trigger factor from Lawsonia intracellularis (strain PHE/MN1-00).